The following is a 181-amino-acid chain: Ribosome maturation factor RimM (181 aa).

The PRC barrel domain maps to 100-177 (EEGFYWMQLI…QIQVDWQLED (78 aa)).

The protein belongs to the RimM family. In terms of assembly, binds ribosomal protein uS19.

The protein localises to the cytoplasm. Functionally, an accessory protein needed during the final step in the assembly of 30S ribosomal subunit, possibly for assembly of the head region. Essential for efficient processing of 16S rRNA. May be needed both before and after RbfA during the maturation of 16S rRNA. It has affinity for free ribosomal 30S subunits but not for 70S ribosomes. This Hydrogenovibrio crunogenus (strain DSM 25203 / XCL-2) (Thiomicrospira crunogena) protein is Ribosome maturation factor RimM.